The following is a 292-amino-acid chain: Ventral anterior homeobox 2 (292 aa).

The segment covering 1–36 (MGDGGAERDRGPKRREEPGGRSGRHGEHRGAEDLRA) has biased composition (basic and acidic residues). Residues 1–74 (MGDGGAERDR…DGQQALGETD (74 aa)) form a disordered region. A DNA-binding region (homeobox) is located at residues 102 to 161 (PKRTRTSFTAEQLYRLEMEFQRCQYVVGRERTELARQLNLSETQVKVWFQNRRTKQKKDQ). The segment at 207 to 242 (LPGLPASHRGTSLVDPRNSSPRLNPMPSASASSPLP) is disordered.

The protein belongs to the EMX homeobox family. Expressed in the developing and mature retina.

Its subcellular location is the nucleus. Transcription factor that may function in dorsoventral specification of the forebrain. Regulates the expression of Wnt signaling antagonists including the expression of a truncated TCF7L2 isoform that cannot bind CTNNB1 and acts therefore as a potent dominant-negative Wnt antagonist. Plays a crucial role in eye development and, in particular, in the specification of the ventral optic vesicle. May be a regulator of axial polarization in the retina. The protein is Ventral anterior homeobox 2 (Vax2) of Mus musculus (Mouse).